The primary structure comprises 155 residues: Small ribosomal subunit protein uS7c (155 aa).

Belongs to the universal ribosomal protein uS7 family. As to quaternary structure, part of the 30S ribosomal subunit.

Its subcellular location is the plastid. It is found in the chloroplast. Its function is as follows. One of the primary rRNA binding proteins, it binds directly to 16S rRNA where it nucleates assembly of the head domain of the 30S subunit. The polypeptide is Small ribosomal subunit protein uS7c (rps7) (Dioscorea bulbifera (Air potato)).